A 226-amino-acid polypeptide reads, in one-letter code: Deoxyribose-phosphate aldolase (226 aa).

The active-site Proton donor/acceptor is aspartate 94. Residue lysine 156 is the Schiff-base intermediate with acetaldehyde of the active site. The active-site Proton donor/acceptor is lysine 185.

It belongs to the DeoC/FbaB aldolase family. DeoC type 1 subfamily.

The protein resides in the cytoplasm. The enzyme catalyses 2-deoxy-D-ribose 5-phosphate = D-glyceraldehyde 3-phosphate + acetaldehyde. Its pathway is carbohydrate degradation; 2-deoxy-D-ribose 1-phosphate degradation; D-glyceraldehyde 3-phosphate and acetaldehyde from 2-deoxy-alpha-D-ribose 1-phosphate: step 2/2. In terms of biological role, catalyzes a reversible aldol reaction between acetaldehyde and D-glyceraldehyde 3-phosphate to generate 2-deoxy-D-ribose 5-phosphate. The polypeptide is Deoxyribose-phosphate aldolase (Burkholderia orbicola (strain MC0-3)).